The sequence spans 192 residues: Elongation factor P (192 aa).

It belongs to the elongation factor P family.

It localises to the cytoplasm. The protein operates within protein biosynthesis; polypeptide chain elongation. Functionally, involved in peptide bond synthesis. Stimulates efficient translation and peptide-bond synthesis on native or reconstituted 70S ribosomes in vitro. Probably functions indirectly by altering the affinity of the ribosome for aminoacyl-tRNA, thus increasing their reactivity as acceptors for peptidyl transferase. This Borreliella afzelii (strain PKo) (Borrelia afzelii) protein is Elongation factor P.